Consider the following 644-residue polypeptide: MAIKKRYVKRLLRKVVLLLVVIVTVSLVTTLVVERRMKNAAELTEQLDPNGDPITPVFRAANIHPTRKAPRPPFQDRNSVVDIPRSDKLQGFRLPEPKGERKDWHDYAAMEADRKRSGFGEHGVAVKIENPDEKQLEKEHYEMNGFNGLISDRISVNRSVPDLRLEACKTRKYLAKLPNISVIFIFFNEHFNTLLRSIYSVINRTPPELLKQIVLVDDGSEWDVLKQPLDDYVQQHFPHLVTIVRNPERQGLIGARIAGAKVAVGQVMVFFDSHIEVNYNWLPPLIEPIAINPKISTCPMVDTISHEDFSYFSGNKDGARGGFDWKMLYKQLPVLPEDALDKSMPYRSPVMMGGLFAINTDFFWDLGGYDDQLDIWGGEQYELSFKIWMCGGMLLDVPCSRVAHIFRGPMKPRGNPRGHNFVAKNHKRVAEVWMDEYKQYVYKRDPKTYDNLDAGDLTRQRGVRERLKCKSFHWFMTEVAPDFLVKFPPVEPPSYAAGIIQNVANPVYCLDNMGKSTEEAVGMFSCADNRTHPQPNQFWELSIFRDLRMKGFDSVCLDVHEGPPNATVWMWSCHSQGGNQFWYYDRQTQRLVHGENNKRCLEGFVENGIAKVVANSCENGNDRQRWEFGFVNHTMLDTFYDGLK.

Residues 1-13 lie on the Cytoplasmic side of the membrane; sequence MAIKKRYVKRLLR. A helical; Signal-anchor for type II membrane protein membrane pass occupies residues 14–34; the sequence is KVVLLLVVIVTVSLVTTLVVE. Over 35–644 the chain is Lumenal; sequence RRMKNAAELT…MLDTFYDGLK (610 aa). Residues asparagine 157 and asparagine 179 are each glycosylated (N-linked (GlcNAc...) asparagine). Residues 177-288 are catalytic subdomain A; it reads LPNISVIFIF…YNWLPPLIEP (112 aa). 2 residues coordinate substrate: aspartate 218 and arginine 249. Aspartate 272 contacts Mn(2+). Serine 273 lines the substrate pocket. Residue histidine 274 coordinates Mn(2+). The tract at residues 345–407 is catalytic subdomain B; it reads PYRSPVMMGG…PCSRVAHIFR (63 aa). Tryptophan 376 is a binding site for substrate. Residue histidine 404 coordinates Mn(2+). Substrate is bound at residue arginine 407. Residues 496–629 form the Ricin B-type lectin domain; it reads AAGIIQNVAN…GNDRQRWEFG (134 aa). Cysteine 509 and cysteine 526 are oxidised to a cystine. 2 N-linked (GlcNAc...) asparagine glycosylation sites follow: asparagine 529 and asparagine 565. Disulfide bonds link cysteine 556–cysteine 573 and cysteine 600–cysteine 617. N-linked (GlcNAc...) asparagine glycosylation occurs at asparagine 632.

It belongs to the glycosyltransferase 2 family. GalNAc-T subfamily. It depends on Mn(2+) as a cofactor. Expressed in developing oocytes and egg chambers. During embryonic stages 9-11, expressed in the primordium of the foregut, midgut and hindgut. During embryonic stages 12-13, shows specific expression in the proventriculus that continues until the end of embryogenesis. In third instar larvae, ubiquitously expressed in wing, eye-antennal, leg and haltere imaginal disks.

The protein resides in the golgi apparatus membrane. The catalysed reaction is L-seryl-[protein] + UDP-N-acetyl-alpha-D-galactosamine = a 3-O-[N-acetyl-alpha-D-galactosaminyl]-L-seryl-[protein] + UDP + H(+). The enzyme catalyses L-threonyl-[protein] + UDP-N-acetyl-alpha-D-galactosamine = a 3-O-[N-acetyl-alpha-D-galactosaminyl]-L-threonyl-[protein] + UDP + H(+). The protein operates within protein modification; protein glycosylation. In terms of biological role, glycopeptide transferase involved in O-linked oligosaccharide biosynthesis, which catalyzes the transfer of an N-acetyl-D-galactosamine residue to an already glycosylated peptide. In contrast to other proteins of the family, it does not act as a peptide transferase that transfers GalNAc onto serine or threonine residue on the protein receptor, but instead requires the prior addition of a GalNAc on a peptide before adding additional GalNAc moieties. Some peptide transferase activity is however not excluded, considering that its appropriate peptide substrate may remain unidentified. Prefers the diglycosylated Muc5AC-3/13 as substrate. In Drosophila melanogaster (Fruit fly), this protein is N-acetylgalactosaminyltransferase 4.